We begin with the raw amino-acid sequence, 352 residues long: Selenide, water dikinase (352 aa).

C23 is an active-site residue. ATP is bound by residues K26 and 54–56; that span reads SRD. D57 serves as a coordination point for Mg(2+). ATP-binding positions include D74, D97, and 145–147; that span reads GHS. D97 lines the Mg(2+) pocket. D233 lines the Mg(2+) pocket.

It belongs to the selenophosphate synthase 1 family. Class I subfamily. In terms of assembly, homodimer. Mg(2+) is required as a cofactor.

The catalysed reaction is hydrogenselenide + ATP + H2O = selenophosphate + AMP + phosphate + 2 H(+). Synthesizes selenophosphate from selenide and ATP. The polypeptide is Selenide, water dikinase (Shewanella baltica (strain OS223)).